Consider the following 172-residue polypeptide: MADRDRAGQYYQQQRGQVGETVKGILPEKAPSASQALTVATLFPLGGLLLVLSGLALAASVVGLAVATPVFLIFSPVLVPAALLIGLAVAGFLTSGALGLGGLSSLTFLANTARQAFQRTPDYVEQARRRMAEAAAHAGHKTAQAGHAIQGRADQAGTGAGAGGGAGTKTSS.

The residue at position 2 (Ala-2) is an N-acetylalanine. Residues 2–38 are polar; the sequence is ADRDRAGQYYQQQRGQVGETVKGILPEKAPSASQALT. Residues 39 to 110 form a hydrophobic region; that stretch reads VATLFPLGGL…GGLSSLTFLA (72 aa). Helical transmembrane passes span 42–62, 70–90, and 91–111; these read LFPL…ASVV, VFLI…LAVA, and GFLT…FLAN. The interval 147-172 is disordered; it reads HAIQGRADQAGTGAGAGGGAGTKTSS. The segment covering 158 to 172 has biased composition (gly residues); the sequence is TGAGAGGGAGTKTSS.

Belongs to the oleosin family.

It localises to the lipid droplet. The protein localises to the membrane. Its function is as follows. May have a structural role to stabilize the lipid body during desiccation of the seed by preventing coalescence of the oil. Probably interacts with both lipid and phospholipid moieties of lipid bodies. May also provide recognition signals for specific lipase anchorage in lipolysis during seedling growth. This Oryza sativa subsp. indica (Rice) protein is Oleosin 18 kDa (OLE18).